The primary structure comprises 434 residues: Peptidase B (434 aa).

Mn(2+) contacts are provided by lysine 198 and aspartate 203. Residue lysine 210 is part of the active site. Mn(2+) contacts are provided by aspartate 221, aspartate 280, and glutamate 282. The active site involves arginine 284.

This sequence belongs to the peptidase M17 family. Homohexamer. Mn(2+) is required as a cofactor.

It is found in the cytoplasm. The enzyme catalyses Release of an N-terminal amino acid, Xaa, from a peptide or arylamide. Xaa is preferably Glu or Asp but may be other amino acids, including Leu, Met, His, Cys and Gln.. Functionally, probably plays an important role in intracellular peptide degradation. This Pasteurella multocida (strain Pm70) protein is Peptidase B.